A 533-amino-acid polypeptide reads, in one-letter code: Metal transporter nramp1 homolog (533 aa).

The interval 1–33 is disordered; that stretch reads MTPRIESEESAPLVNKNNNNNNDNNNNNNVDEE. Topologically, residues 1 to 68 are cytoplasmic; that stretch reads MTPRIESEES…PNIDKPDSKW (68 aa). Positions 14 to 29 are enriched in low complexity; sequence VNKNNNNNNDNNNNNN. Residues 69–89 form a helical membrane-spanning segment; the sequence is INFKTLWAFTGPGFLMSIAYL. The Extracellular segment spans residues 90–101; it reads DPGNLESDIQAG. The helical transmembrane segment at 102-122 threads the bilayer; it reads AMAGYQLLWVLFWSTVIGFWL. The Cytoplasmic portion of the chain corresponds to 123-158; the sequence is QMLASRLGVVTGKHLAEHCREQYPKTPRLLLWLMTE. The helical transmembrane segment at 159–179 threads the bilayer; it reads LAIIGSDIQEVIGTAIALQIL. At 180–182 the chain is on the extracellular side; sequence SNG. The helical transmembrane segment at 183–203 threads the bilayer; sequence HIPLWAGVLFTAADTFTFLFL. The Cytoplasmic segment spans residues 204-212; that stretch reads EKYGIRKLE. The chain crosses the membrane as a helical span at residues 213 to 233; that stretch reads AFFCSLIAIMAISFGVEYIIS. Over 234–256 the chain is Extracellular; that stretch reads KPDQIEVVKGVFIPLCSQNNISQ. Asn-253 carries N-linked (GlcNAc...) asparagine glycosylation. The chain crosses the membrane as a helical span at residues 257-277; the sequence is AVGILGAVVMPHNIYLHSALV. The Cytoplasmic segment spans residues 278-302; it reads QSREIDRKSETQVKIANKYNRLESA. The helical transmembrane segment at 303 to 323 threads the bilayer; that stretch reads FALIISFIINLLLVSVFAKGF. The Extracellular segment spans residues 324 to 348; it reads YGETTEIGLSSAADFLMDKYGKVAK. A helical transmembrane segment spans residues 349 to 368; sequence YIWAIGLFSAGQCSTMTGTY. Residues 369–387 lie on the Cytoplasmic side of the membrane; the sequence is SGQFVMEGFLKLKIAPWKR. Residues 388-408 form a helical membrane-spanning segment; the sequence is LLITRCTAIVPAMVVAILSTS. Topologically, residues 409-415 are extracellular; it reads HLDSLDQ. A helical membrane pass occupies residues 416-436; that stretch reads WLNILQSIQLPFAVVPVLLFT. Topologically, residues 437–457 are cytoplasmic; it reads SSEKIMGSKFKNHWLNNQFVR. Residues 458–478 traverse the membrane as a helical segment; the sequence is FLSLLIIAINIYLIITFSMQI. Residues 479–481 lie on the Extracellular side of the membrane; sequence SES. A helical transmembrane segment spans residues 482 to 502; the sequence is AWMISIVSISFFFYFIFIVYL. The Cytoplasmic segment spans residues 503–533; it reads SMGQENFNSMTKKIKNLFNNNSNQTYNNINY.

Belongs to the NRAMP family.

It localises to the membrane. Depletes iron from the phagolysosome in an ATP-dependent process. May rather act as a symporter of protons and metal cations in an ATP-dependent process. Nramp1 overexpression protected cells from L.pneumophila infection. The sequence is that of Metal transporter nramp1 homolog (nramp1) from Dictyostelium discoideum (Social amoeba).